Reading from the N-terminus, the 674-residue chain is PTS system glucose-specific EIIBCA component (674 aa).

A PTS EIIB type-1 domain is found at Met-1–Ala-89. The active-site Phosphocysteine intermediate; for EIIB activity is Cys-28. Positions Glu-117–Gln-476 constitute a PTS EIIC type-1 domain. 10 helical membrane passes run Ile-126–Phe-146, Tyr-162–Ala-182, Trp-193–Ala-213, Val-225–Trp-245, Met-260–Gly-280, Phe-303–Trp-323, Pro-344–Leu-364, Leu-376–Leu-396, Gly-409–Phe-429, and Leu-442–Phe-462. The region spanning Asp-542–Asn-646 is the PTS EIIA type-1 domain. His-594 functions as the Tele-phosphohistidine intermediate; for EIIA activity in the catalytic mechanism.

Its subcellular location is the cell membrane. It catalyses the reaction N(pros)-phospho-L-histidyl-[protein] + D-glucose(out) = D-glucose 6-phosphate(in) + L-histidyl-[protein]. In terms of biological role, the phosphoenolpyruvate-dependent sugar phosphotransferase system (sugar PTS), a major carbohydrate active transport system, catalyzes the phosphorylation of incoming sugar substrates concomitantly with their translocation across the cell membrane. This system is involved in glucose transport. This chain is PTS system glucose-specific EIIBCA component (ptsG), found in Corynebacterium glutamicum (Brevibacterium saccharolyticum).